The primary structure comprises 383 residues: Spermidine/putrescine import ATP-binding protein PotA (383 aa).

The ABC transporter domain maps to 12–246; sequence IALRDISKVY…PSTPFVAGFI (235 aa). 48-55 serves as a coordination point for ATP; it reads GPSGCGKT.

It belongs to the ABC transporter superfamily. Spermidine/putrescine importer (TC 3.A.1.11.1) family. In terms of assembly, the complex is composed of two ATP-binding proteins (PotA), two transmembrane proteins (PotB and PotC) and a solute-binding protein (PotD).

The protein localises to the cell membrane. The catalysed reaction is ATP + H2O + polyamine-[polyamine-binding protein]Side 1 = ADP + phosphate + polyamineSide 2 + [polyamine-binding protein]Side 1.. Its function is as follows. Part of the ABC transporter complex PotABCD involved in spermidine/putrescine import. Responsible for energy coupling to the transport system. This is Spermidine/putrescine import ATP-binding protein PotA from Acidothermus cellulolyticus (strain ATCC 43068 / DSM 8971 / 11B).